Consider the following 89-residue polypeptide: UPF0250 protein CV_3095 (89 aa).

It belongs to the UPF0250 family.

This is UPF0250 protein CV_3095 from Chromobacterium violaceum (strain ATCC 12472 / DSM 30191 / JCM 1249 / CCUG 213 / NBRC 12614 / NCIMB 9131 / NCTC 9757 / MK).